Consider the following 1284-residue polypeptide: ABC multidrug transporter atrC (1284 aa).

Residues 1 to 11 (MKSTAESKETP) show a composition bias toward basic and acidic residues. The interval 1–24 (MKSTAESKETPSQDESTTSVPCTE) is disordered. Helical transmembrane passes span 55–75 (AVAILAACASGAGIALQNLIF), 99–119 (AAELALYFVYLGIARLVLSYT), 178–198 (IGLLFQGLAAFVTAFIIAFVV), 203–223 (TLICICIPVATIGTTGVVAAV), 282–302 (LLGLLFSAEYTIIYLGYGLAF), and 320–340 (IFTVLLSVVIASINLTLLAPY). Residues 55–346 (AVAILAACAS…LAPYSIEFSR (292 aa)) form the ABC transmembrane type-1 1 domain. An ABC transporter 1 domain is found at 381–626 (VELENVTFSY…DGVYAGLVKI (246 aa)). N-linked (GlcNAc...) asparagine glycosylation is found at N385 and N401. An ATP-binding site is contributed by 416 to 423 (GQSGSGKS). N-linked (GlcNAc...) asparagine glycans are attached at residues N488 and N632. Transmembrane regions (helical) follow at residues 705–725 (LVVLLGCLGGCAMYPGQAILM) and 745–765 (FYASMLIVLAAGCLICYLAVG). Residues 705–992 (LVVLLGCLGG…LFQWSTSITK (288 aa)) enclose the ABC transmembrane type-1 2 domain. N800 is a glycosylation site (N-linked (GlcNAc...) asparagine). Transmembrane regions (helical) follow at residues 824–844 (IALVVIAVLQVVTCGILAIAF), 846–866 (WKLGLVVVFGGIPPLVGAGMV), 931–951 (MICFGLTQCIEYWFQALGFWY), and 955–975 (LVSLGETSMYSFFVAFLSVFF). N995 carries an N-linked (GlcNAc...) asparagine glycan. The ABC transporter 2 domain maps to 1027-1280 (IAMDNVRFSY…GGLYRRMCEA (254 aa)). 1062–1069 (GSSGCGKS) contacts ATP. An N-linked (GlcNAc...) asparagine glycan is attached at N1122.

The protein belongs to the ABC transporter superfamily. ABCB family. Multidrug resistance exporter (TC 3.A.1.201) subfamily.

It localises to the cell membrane. In terms of biological role, pleiotropic ABC efflux transporter involved in the protection of the cells against a wide range of toxic compounds. This is ABC multidrug transporter atrC from Emericella nidulans (strain FGSC A4 / ATCC 38163 / CBS 112.46 / NRRL 194 / M139) (Aspergillus nidulans).